The chain runs to 432 residues: Pachytene checkpoint protein 2 homolog (432 aa).

Methionine 1 bears the N-acetylmethionine mark. Residue 179-186 coordinates ATP; it reads GPPGTGKT.

It belongs to the AAA ATPase family. PCH2 subfamily. In terms of assembly, specifically interacts with the ligand binding domain of the thyroid receptor (TR). This interaction does not require the presence of thyroid hormone for its interaction. Interacts with proteasome subunit PSMA8; to participate in meiosis progression during spermatogenesis.

Its function is as follows. Plays a key role in chromosome recombination and chromosome structure development during meiosis. Required at early steps in meiotic recombination that leads to non-crossovers pathways. Also needed for efficient completion of homologous synapsis by influencing crossover distribution along the chromosomes affecting both crossovers and non-crossovers pathways. Also required for development of higher-order chromosome structures and is needed for synaptonemal-complex formation. In males, required for efficient synapsis of the sex chromosomes and for sex body formation. Promotes early steps of the DNA double-strand breaks (DSBs) repair process upstream of the assembly of RAD51 complexes. Required for depletion of HORMAD1 and HORMAD2 from synapsed chromosomes. The polypeptide is Pachytene checkpoint protein 2 homolog (TRIP13) (Canis lupus familiaris (Dog)).